Consider the following 359-residue polypeptide: POU domain, class 5, transcription factor 1B (359 aa).

Disordered regions lie at residues 1–53 (MAGH…GVGP) and 87–116 (QGGL…EPCT). The residue at position 111 (Ser111) is a Phosphoserine. The 75-residue stretch at 138–212 (DIKALQKELE…LLQKWVEEAD (75 aa)) folds into the POU-specific domain. The homeobox DNA-binding region spans 229–288 (ARKRKRTSIENRVRGNLENLFLQCPKPTLQISHIAQQLGLEKDVVRVWFCNRRQKGKRSS). The residue at position 235 (Thr235) is a Phosphothreonine. 3 positions are modified to phosphoserine: Ser236, Ser288, and Ser289. Residues 287–322 (SSSDYAQREDFEAAGSPFSGGPVSFPPAPGPHFGTP) form a disordered region. A compositionally biased stretch (low complexity) spans 299-309 (AAGSPFSGGPV). A Phosphoserine modification is found at Ser354.

This sequence belongs to the POU transcription factor family. Class-5 subfamily. As to expression, detected in epithelial cells of the prostate (at protein level). Detected at the mRNA level in several cancer tissues (breast, uterine cervix, lung, thyroid gland, esophagus, colon, urinary bladder, and glioma).

It localises to the nucleus. Its subcellular location is the cytoplasm. Shows weak transcriptional activator activity. The chain is POU domain, class 5, transcription factor 1B (POU5F1B) from Homo sapiens (Human).